The chain runs to 326 residues: Heterodimeric geranylgeranyl pyrophosphate synthase small subunit, chloroplastic (326 aa).

The transit peptide at 1-33 (MLFSGSAIPLSSFCSLPEKPHTLPMKLSPAAIR) directs the protein to the chloroplast. Isopentenyl diphosphate contacts are provided by Lys-88 and His-120. Residues Asp-127 and Asp-133 each contribute to the Mg(2+) site. A dimethylallyl diphosphate-binding site is contributed by Arg-138. Position 139 (Arg-139) interacts with isopentenyl diphosphate. Residues Lys-220 and Gln-258 each coordinate dimethylallyl diphosphate. Residues 274-301 (GAEKGMMEMAEELKEKAKKELQVFDNKY) adopt a coiled-coil conformation.

It belongs to the FPP/GGPP synthase family. Part of a heterodimeric geranyl(geranyl)diphosphate synthase. Interacts with GGPPS1 or GGPPS2, but not with GGPPS9. Interacts with LIL3.1 and LIL3.2. The cofactor is Mg(2+). In terms of tissue distribution, expressed ubiquitously.

It is found in the plastid. The protein localises to the chloroplast thylakoid membrane. Its function is as follows. Heterodimeric geranyl(geranyl)-diphosphate (GPP) synthase small subunit. The small subunit alone is inactive in vitro while the large subunit GGPPS1 catalyzes mainly the production of geranygeranyl-diphosphate in vitro. Upon association of the two subunits, the product profile changes and the production of gerany-diphosphate is strongly increased. This chain is Heterodimeric geranylgeranyl pyrophosphate synthase small subunit, chloroplastic (GGR), found in Arabidopsis thaliana (Mouse-ear cress).